A 426-amino-acid chain; its full sequence is Glutamate-1-semialdehyde 2,1-aminomutase (426 aa).

Position 265 is an N6-(pyridoxal phosphate)lysine (Lys-265).

This sequence belongs to the class-III pyridoxal-phosphate-dependent aminotransferase family. HemL subfamily. In terms of assembly, homodimer. It depends on pyridoxal 5'-phosphate as a cofactor.

Its subcellular location is the cytoplasm. It catalyses the reaction (S)-4-amino-5-oxopentanoate = 5-aminolevulinate. It functions in the pathway porphyrin-containing compound metabolism; protoporphyrin-IX biosynthesis; 5-aminolevulinate from L-glutamyl-tRNA(Glu): step 2/2. The protein is Glutamate-1-semialdehyde 2,1-aminomutase of Cellvibrio japonicus (strain Ueda107) (Pseudomonas fluorescens subsp. cellulosa).